The following is a 95-amino-acid chain: Parvalbumin beta 3 (95 aa).

An N-acetylalanine modification is found at A1. 2 EF-hand domains span residues 39 to 66 and 77 to 95; these read FFAI…FSAG and DVDG…LVKA. The Ca(2+) site is built by D44, D46, S48, F50, E52, E55, D77, D79, D81, M83, and E88.

The protein belongs to the parvalbumin family.

In muscle, parvalbumin is thought to be involved in relaxation after contraction. It binds two calcium ions. The protein is Parvalbumin beta 3 of Merluccius paradoxus (Deep-water Cape hake).